The sequence spans 173 residues: Bifunctional protein PyrR (173 aa).

Positions 93-105 match the PRPP-binding motif; the sequence is VILVDDVLYTGRT.

The protein belongs to the purine/pyrimidine phosphoribosyltransferase family. PyrR subfamily. Homodimer and homohexamer; in equilibrium.

It catalyses the reaction UMP + diphosphate = 5-phospho-alpha-D-ribose 1-diphosphate + uracil. Its function is as follows. Regulates transcriptional attenuation of the pyrimidine nucleotide (pyr) operon by binding in a uridine-dependent manner to specific sites on pyr mRNA. This disrupts an antiterminator hairpin in the RNA and favors formation of a downstream transcription terminator, leading to a reduced expression of downstream genes. Also displays a weak uracil phosphoribosyltransferase activity which is not physiologically significant. In Streptococcus suis (strain 05ZYH33), this protein is Bifunctional protein PyrR.